The primary structure comprises 340 residues: Tryptophan--tRNA ligase (340 aa).

ATP is bound by residues 11–13 (RPT) and 19–20 (GH). Residues 12–20 (PTGKLHLGH) carry the 'HIGH' region motif. Aspartate 140 provides a ligand contact to L-tryptophan. ATP contacts are provided by residues 152–154 (GND), leucine 194, and 202–206 (KMSKS). Residues 202-206 (KMSKS) carry the 'KMSKS' region motif.

It belongs to the class-I aminoacyl-tRNA synthetase family. Homodimer.

It is found in the cytoplasm. It carries out the reaction tRNA(Trp) + L-tryptophan + ATP = L-tryptophyl-tRNA(Trp) + AMP + diphosphate + H(+). In terms of biological role, catalyzes the attachment of tryptophan to tRNA(Trp). The chain is Tryptophan--tRNA ligase from Streptococcus pyogenes serotype M1.